Consider the following 285-residue polypeptide: Phosphatidylglycerol--prolipoprotein diacylglyceryl transferase (285 aa).

The next 4 membrane-spanning stretches (helical) occupy residues 26 to 46, 71 to 91, 107 to 127, and 133 to 153; these read IALH…WWYV, FVVW…VLIW, WDGG…IIWF, and INIW…IGVV. Position 154 (Arg-154) interacts with a 1,2-diacyl-sn-glycero-3-phospho-(1'-sn-glycerol). The next 3 membrane-spanning stretches (helical) occupy residues 194–214, 218–238, and 256–276; these read LMEG…FKAF, GTVA…SEIF, and GFTY…YAIF.

Belongs to the Lgt family.

It localises to the cell inner membrane. The catalysed reaction is L-cysteinyl-[prolipoprotein] + a 1,2-diacyl-sn-glycero-3-phospho-(1'-sn-glycerol) = an S-1,2-diacyl-sn-glyceryl-L-cysteinyl-[prolipoprotein] + sn-glycerol 1-phosphate + H(+). It participates in protein modification; lipoprotein biosynthesis (diacylglyceryl transfer). Functionally, catalyzes the transfer of the diacylglyceryl group from phosphatidylglycerol to the sulfhydryl group of the N-terminal cysteine of a prolipoprotein, the first step in the formation of mature lipoproteins. The chain is Phosphatidylglycerol--prolipoprotein diacylglyceryl transferase from Bartonella bacilliformis (strain ATCC 35685 / KC583 / Herrer 020/F12,63).